The chain runs to 168 residues: Phospholipase A and acyltransferase 1 (168 aa).

The Cytoplasmic portion of the chain corresponds to 1–138 (MAFNDCFSLN…GEGVSEQANR (138 aa)). The region spanning 20-135 (LIEVFRPGYQ…LRYGEGVSEQ (116 aa)) is the LRAT domain. Histidine 30 is an active-site residue. Cysteine 119 functions as the Acyl-thioester intermediate in the catalytic mechanism. Residues 139 to 159 (AISTVEFVTAAVGVFSFLGLF) traverse the membrane as a helical segment. The Lumenal portion of the chain corresponds to 160-168 (PKGQRAKYY).

It belongs to the H-rev107 family. Abundantly expressed in testis, skeletal muscle, brain, and heart. In terms of tissue distribution, highly expressed in the testis, skeletal muscle, brain, heart, and thyroid.

Its subcellular location is the membrane. It localises to the cytoplasm. The protein localises to the nucleus. It catalyses the reaction a 1,2-diacyl-sn-glycero-3-phosphocholine + H2O = a 1-acyl-sn-glycero-3-phosphocholine + a fatty acid + H(+). The enzyme catalyses a 1,2-diacyl-sn-glycero-3-phosphocholine + H2O = a 2-acyl-sn-glycero-3-phosphocholine + a fatty acid + H(+). The catalysed reaction is 1,2-dihexadecanoyl-sn-glycero-3-phosphocholine + H2O = 2-hexadecanoyl-sn-glycero-3-phosphocholine + hexadecanoate + H(+). It carries out the reaction 1,2-dihexadecanoyl-sn-glycero-3-phosphocholine + H2O = 1-hexadecanoyl-sn-glycero-3-phosphocholine + hexadecanoate + H(+). It catalyses the reaction 1-hexadecanoyl-2-(5Z,8Z,11Z,14Z-eicosatetraenoyl)-sn-glycero-3-phosphoethanolamine + H2O = 2-(5Z,8Z,11Z,14Z)-eicosatetraenoyl-sn-glycero-3-phosphoethanolamine + hexadecanoate + H(+). The enzyme catalyses 1-hexadecanoyl-2-(5Z,8Z,11Z,14Z-eicosatetraenoyl)-sn-glycero-3-phosphoethanolamine + H2O = 1-hexadecanoyl-sn-glycero-3-phosphoethanolamine + (5Z,8Z,11Z,14Z)-eicosatetraenoate + H(+). The catalysed reaction is 1,2-di-(9Z-octadecenoyl)-sn-glycero-3-phosphoethanolamine + 1,2-dihexadecanoyl-sn-glycero-3-phosphocholine = hexadecanoyl-sn-glycero-3-phosphocholine + N-hexadecanoyl-1,2-di-(9Z-octadecenoyl)-sn-glycero-3-phosphoethanolamine + H(+). It carries out the reaction 1,2-dihexadecanoyl-sn-glycero-3-phosphocholine + a 2-acyl-sn-glycero-3-phosphocholine = a 1-hexadecanoyl-2-acyl-sn-glycero-3-phosphocholine + 2-hexadecanoyl-sn-glycero-3-phosphocholine. Its function is as follows. Exhibits both phospholipase A1/2 and acyltransferase activities. Shows phospholipase A1 (PLA1) and A2 (PLA2) activity, catalyzing the calcium-independent release of fatty acids from the sn-1 or sn-2 position of glycerophospholipids. Shows O-acyltransferase activity, catalyzing the transfer of a fatty acyl group from glycerophospholipid to the hydroxyl group of lysophospholipid. Shows N-acyltransferase activity, catalyzing the calcium-independent transfer of a fatty acyl group at the sn-1 position of phosphatidylcholine (PC) and other glycerophospholipids to the primary amine of phosphatidylethanolamine (PE), forming N-acylphosphatidylethanolamine (NAPE) which serves as precursor for N-acylethanolamines (NAEs). This is Phospholipase A and acyltransferase 1 from Homo sapiens (Human).